Reading from the N-terminus, the 453-residue chain is Cholesterol 7-desaturase nvd (453 aa).

The chain crosses the membrane as a helical span at residues 53–73; that stretch reads IVEYILILTLMFAFSAILYVI. Residues 126 to 229 form the Rieske domain; that stretch reads WFAVAETREL…VVETDGAIWI (104 aa). [2Fe-2S] cluster contacts are provided by Cys167, His169, Cys187, and His190.

The protein belongs to the cholesterol 7-desaturase family. The cofactor is [2Fe-2S] cluster.

The protein resides in the membrane. It carries out the reaction cholesterol + NADPH + O2 + H(+) = 7-dehydrocholesterol + NADP(+) + 2 H2O. The catalysed reaction is cholesterol + NADH + O2 + H(+) = 7-dehydrocholesterol + NAD(+) + 2 H2O. Its pathway is steroid hormone biosynthesis; dafachronic acid biosynthesis. Functionally, catalyzes the production of 7-dehydrocholesterol (7-DHC or cholesta-5,7-dien-3beta-ol) by inserting a double bond (desaturating) at the C7-C8 single bond of cholesterol. Essential regulator of steroid biosynthesis as this reaction is the first step in the synthesis of the steroid hormone Delta(7)-dafachronic acid. In Bombyx mori (Silk moth), this protein is Cholesterol 7-desaturase nvd.